The chain runs to 299 residues: Bifunctional protein FolD (299 aa).

NADP(+) is bound by residues 168–170, serine 193, and isoleucine 234; that span reads GRS.

Belongs to the tetrahydrofolate dehydrogenase/cyclohydrolase family. As to quaternary structure, homodimer.

It catalyses the reaction (6R)-5,10-methylene-5,6,7,8-tetrahydrofolate + NADP(+) = (6R)-5,10-methenyltetrahydrofolate + NADPH. The catalysed reaction is (6R)-5,10-methenyltetrahydrofolate + H2O = (6R)-10-formyltetrahydrofolate + H(+). Its pathway is one-carbon metabolism; tetrahydrofolate interconversion. Its function is as follows. Catalyzes the oxidation of 5,10-methylenetetrahydrofolate to 5,10-methenyltetrahydrofolate and then the hydrolysis of 5,10-methenyltetrahydrofolate to 10-formyltetrahydrofolate. In Bartonella bacilliformis (strain ATCC 35685 / KC583 / Herrer 020/F12,63), this protein is Bifunctional protein FolD.